The sequence spans 420 residues: 3-isopropylmalate dehydratase large subunit (420 aa).

3 residues coordinate [4Fe-4S] cluster: cysteine 300, cysteine 361, and cysteine 364.

The protein belongs to the aconitase/IPM isomerase family. LeuC type 2 subfamily. In terms of assembly, heterodimer of LeuC and LeuD. [4Fe-4S] cluster serves as cofactor.

It carries out the reaction (2R,3S)-3-isopropylmalate = (2S)-2-isopropylmalate. The protein operates within amino-acid biosynthesis; L-leucine biosynthesis; L-leucine from 3-methyl-2-oxobutanoate: step 2/4. Its function is as follows. Catalyzes the isomerization between 2-isopropylmalate and 3-isopropylmalate, via the formation of 2-isopropylmaleate. In Endomicrobium trichonymphae, this protein is 3-isopropylmalate dehydratase large subunit.